We begin with the raw amino-acid sequence, 95 residues long: Aspartyl/glutamyl-tRNA(Asn/Gln) amidotransferase subunit C (95 aa).

The protein belongs to the GatC family. As to quaternary structure, heterotrimer of A, B and C subunits.

The enzyme catalyses L-glutamyl-tRNA(Gln) + L-glutamine + ATP + H2O = L-glutaminyl-tRNA(Gln) + L-glutamate + ADP + phosphate + H(+). The catalysed reaction is L-aspartyl-tRNA(Asn) + L-glutamine + ATP + H2O = L-asparaginyl-tRNA(Asn) + L-glutamate + ADP + phosphate + 2 H(+). Its function is as follows. Allows the formation of correctly charged Asn-tRNA(Asn) or Gln-tRNA(Gln) through the transamidation of misacylated Asp-tRNA(Asn) or Glu-tRNA(Gln) in organisms which lack either or both of asparaginyl-tRNA or glutaminyl-tRNA synthetases. The reaction takes place in the presence of glutamine and ATP through an activated phospho-Asp-tRNA(Asn) or phospho-Glu-tRNA(Gln). In Pseudomonas entomophila (strain L48), this protein is Aspartyl/glutamyl-tRNA(Asn/Gln) amidotransferase subunit C.